The chain runs to 391 residues: Arginine biosynthesis bifunctional protein ArgJ 2 (391 aa).

The substrate site is built by Lys167 and Ser180. Residue Ser180 is the Nucleophile of the active site.

Belongs to the ArgJ family. In terms of assembly, heterotetramer of two alpha and two beta chains.

It is found in the cytoplasm. It carries out the reaction N(2)-acetyl-L-ornithine + L-glutamate = N-acetyl-L-glutamate + L-ornithine. It catalyses the reaction L-glutamate + acetyl-CoA = N-acetyl-L-glutamate + CoA + H(+). It participates in amino-acid biosynthesis; L-arginine biosynthesis; L-ornithine and N-acetyl-L-glutamate from L-glutamate and N(2)-acetyl-L-ornithine (cyclic): step 1/1. It functions in the pathway amino-acid biosynthesis; L-arginine biosynthesis; N(2)-acetyl-L-ornithine from L-glutamate: step 1/4. In terms of biological role, catalyzes two activities which are involved in the cyclic version of arginine biosynthesis: the synthesis of N-acetylglutamate from glutamate and acetyl-CoA as the acetyl donor, and of ornithine by transacetylation between N(2)-acetylornithine and glutamate. In Streptomyces clavuligerus, this protein is Arginine biosynthesis bifunctional protein ArgJ 2.